A 132-amino-acid polypeptide reads, in one-letter code: uncharacterized protein (132 aa).

Helical transmembrane passes span 6-26 (WIYAVFTILIIGLGLGSRAFS), 34-54 (NTYLGDSLWAAMIFTGCGFLF), 59-79 (TMITGIISLSFCFVIEFSQLY), and 106-126 (IEAYTIGIAACAAIELLVLGI).

It is found in the cell membrane. This is an uncharacterized protein from Bacillus subtilis (strain 168).